The chain runs to 199 residues: Probable NADH dehydrogenase [ubiquinone] iron-sulfur protein 7, mitochondrial (199 aa).

[4Fe-4S] cluster is bound by residues Cys-74, Cys-75, Cys-139, and Cys-169.

It belongs to the complex I 20 kDa subunit family. Complex I is composed of 45 different subunits This is a component of the iron-sulfur (IP) fragment of the enzyme. [4Fe-4S] cluster serves as cofactor.

The protein localises to the mitochondrion. It catalyses the reaction a ubiquinone + NADH + 5 H(+)(in) = a ubiquinol + NAD(+) + 4 H(+)(out). Its function is as follows. Core subunit of the mitochondrial membrane respiratory chain NADH dehydrogenase (Complex I) that is believed to belong to the minimal assembly required for catalysis. Complex I functions in the transfer of electrons from NADH to the respiratory chain. The immediate electron acceptor for the enzyme is believed to be ubiquinone. In Caenorhabditis elegans, this protein is Probable NADH dehydrogenase [ubiquinone] iron-sulfur protein 7, mitochondrial (nduf-7).